The sequence spans 673 residues: Metal-nicotianamine transporter YSL1 (673 aa).

Residues 1–13 (MEIEQRRIMKREG) show a composition bias toward basic and acidic residues. The segment at 1 to 39 (MEIEQRRIMKREGEEEEDNNQLSLQEEEPDTEEEMSGRT) is disordered. Acidic residues predominate over residues 14-34 (EEEEDNNQLSLQEEEPDTEEE). The next 16 membrane-spanning stretches (helical) occupy residues 46 to 66 (QITVRGVFVSIVIGVVFSVIA), 71 to 91 (LTTGIVPNLNSSAALLAFVFV), 119 to 139 (SAVACYGIAVGGGFASYLLGL), 163 to 183 (GLGWMTAYLFVVCFIGLFVLI), 225 to 245 (FMKYFSFSFLWGFFQWFFSGI), 260 to 280 (AWKQTFFFDFSMTFVGAGMIC), 283 to 303 (LVNLSLLLGAILSYGLMWPLL), 328 to 348 (VFLSVALILGDGLYTFVKILF), 392 to 412 (FAVSGYLTFAAVSTVVVPLIF), 420 to 440 (VIVAYIFAPSLAFCNAYGAGL), 442 to 462 (DINMAYNYGKIGLFVIAAVTG), 467 to 487 (VVAGLAGCGLIKSVVSVSCIL), 510 to 530 (IGTVVGCIVTPLSFFLFYKAF), 558 to 578 (FSALPLHCLQMCYGFFGFAVL), 604 to 624 (FLVGAYFAIDMCVGTLIVFVW), and 642 to 662 (GLICGEGLWTLPAAVLALAGV).

Belongs to the YSL (TC 2.A.67.2) family. In terms of tissue distribution, low levels of expression in leaves and shoots, but not detected in roots. Restricted to the vasculature, in the xylem parenchyma surrounding xylem tubes. Expressed in pollen grains, in the vasculature of petals and sepals, in the carpel veins, in the style underneath the stigmatic papillae, in the vascular tissue of the funiculus and in the chalazal endosperm.

The protein resides in the membrane. Functionally, involved in iron loading of the seeds. Acts probably as a transporter of iron- and metal-nicotianamine chelates. The sequence is that of Metal-nicotianamine transporter YSL1 (YSL1) from Arabidopsis thaliana (Mouse-ear cress).